A 120-amino-acid polypeptide reads, in one-letter code: Large ribosomal subunit protein uL18 (120 aa).

The protein belongs to the universal ribosomal protein uL18 family. In terms of assembly, part of the 50S ribosomal subunit; part of the 5S rRNA/L5/L18/L25 subcomplex. Contacts the 5S and 23S rRNAs.

This is one of the proteins that bind and probably mediate the attachment of the 5S RNA into the large ribosomal subunit, where it forms part of the central protuberance. This is Large ribosomal subunit protein uL18 from Bradyrhizobium sp. (strain ORS 278).